The sequence spans 236 residues: Small ribosomal subunit protein uS2c (236 aa).

It belongs to the universal ribosomal protein uS2 family.

It localises to the plastid. The protein resides in the chloroplast. In Oenothera biennis (German evening primrose), this protein is Small ribosomal subunit protein uS2c (rps2).